The chain runs to 402 residues: Iripin-8 (402 aa).

Positions 1-16 (MTRLLWLFAAITASLA) are cleaved as a signal peptide. N-linked (GlcNAc...) asparagine glycans are attached at residues N164 and N230.

The protein belongs to the serpin family. In terms of assembly, interacts with host thrombin/F2. Interacts with host coagulation factor VII/F7 (activated). Interacts with host coagulation factor X/F10 (activated). Interacts with host coagulation factor XII/F12 (activated). Interacts with host coagulation factor IX/F9 (activated). Interacts with host plasmin/PLG. Interacts with host protein C/PROC (activated). Saliva (at protein level). Salivary gland. Midgut. Low-level expression in ovary.

The protein resides in the secreted. Serine protease inhibitor that modulates blood feeding of ticks on vertebrate species. Inhibits the intrinsic and common pathways of blood coagulation in the host. Inhibits host thrombin, factor VIIa, factor Xa, factor XIa, factor XIIa, plasmin and activated protein C. Inhibits host trypsin and kallikrein. Reduces host complement activity. Does not affect proliferation of CD4+ T-cells and neutrophil migration. In Ixodes ricinus (Common tick), this protein is Iripin-8.